The chain runs to 152 residues: Calcium-binding protein SPEC 1A (152 aa).

4 EF-hand domains span residues 10–45 (EEVT…TGKS), 46–81 (YTDK…QMVK), 84–119 (WKEE…SKPP), and 120–152 (MKRK…IKSC). Asp23, Asp25, Ser27, Ser29, Glu34, Asp59, Asp61, Ser63, Thr65, Glu70, Asp97, Asp99, Asn101, Ser103, Glu108, Asp133, Asn135, Asp137, Lys139, and Glu144 together coordinate Ca(2+). Positions 95–121 (DMDKDGNGSLSPQELREALSASKPPMK) are disordered.

In terms of tissue distribution, found in cell lineages giving rise to the aboral ectoderm, a squamous epithelium covering the surface of the late stage embryo and larva.

Calcium-binding protein involved in larval development and metamorphosis. Likely to function as calcium buffers mediating the transport of calcium from the sea water to the blastocoel where calcium is required for skeleton formation. This Strongylocentrotus purpuratus (Purple sea urchin) protein is Calcium-binding protein SPEC 1A (SPEC1).